The chain runs to 300 residues: 17-beta-hydroxysteroid dehydrogenase 13 (300 aa).

The signal sequence occupies residues 1–19 (MNIILEILLLLITIIYSYL). At Ser33 the chain carries Phosphoserine. 40-67 (LITGAGHGIGRQTTYEFAKRQSILVLWD) serves as a coordination point for NAD(+). Ser172 is a substrate binding site. The Proton acceptor role is filled by Tyr185. Position 189 (Lys189) interacts with NAD(+).

Belongs to the short-chain dehydrogenases/reductases (SDR) family. As to expression, highly expressed in the liver. Also detected in ovary, bone marrow, kidney, brain, lung, skeletal muscle, bladder and testis.

Its subcellular location is the lipid droplet. The protein localises to the endoplasmic reticulum. The protein resides in the cytoplasm. The catalysed reaction is 17beta-estradiol + NAD(+) = estrone + NADH + H(+). The enzyme catalyses all-trans-retinol + NAD(+) = all-trans-retinal + NADH + H(+). It catalyses the reaction all-trans-retinal + NAD(+) + H2O = all-trans-retinoate + NADH + 2 H(+). Plays a pivotal role in hepatic lipid metabolism. In vitro, it catalyzes the oxidation of a variety of lipid substrates, including 17beta-estradiol, retinol, retinal, and leukotriene B4. Its function is as follows. Has retinol/retinal dehydrogenase activity in vitro. Functionally, does not have retinol/retinal dehydrogenase activity in vitro. In Homo sapiens (Human), this protein is 17-beta-hydroxysteroid dehydrogenase 13.